Here is a 232-residue protein sequence, read N- to C-terminus: Succinyl-CoA:3-ketoacid coenzyme A transferase subunit A (232 aa).

Gly24–Gly30 contributes to the CoA binding site.

It belongs to the 3-oxoacid CoA-transferase subunit A family. Heterodimer of a subunit A and a subunit B.

The catalysed reaction is a 3-oxo acid + succinyl-CoA = a 3-oxoacyl-CoA + succinate. This is Succinyl-CoA:3-ketoacid coenzyme A transferase subunit A (scoA) from Helicobacter pylori (strain J99 / ATCC 700824) (Campylobacter pylori J99).